A 156-amino-acid polypeptide reads, in one-letter code: Transcriptional repressor NrdR (156 aa).

The segment at 3–34 (CPYCRHPDSRVVDSREAEEGAAIRRRRSCPNC) is a zinc-finger region. The ATP-cone domain maps to 46-136 (LSVVKRSGVT…VYRSFTSAED (91 aa)).

This sequence belongs to the NrdR family. Requires Zn(2+) as cofactor.

Functionally, negatively regulates transcription of bacterial ribonucleotide reductase nrd genes and operons by binding to NrdR-boxes. This chain is Transcriptional repressor NrdR, found in Nocardia farcinica (strain IFM 10152).